Reading from the N-terminus, the 211-residue chain is Uridine kinase (211 aa).

Gly12–Thr19 contributes to the ATP binding site.

This sequence belongs to the uridine kinase family.

Its subcellular location is the cytoplasm. It carries out the reaction uridine + ATP = UMP + ADP + H(+). It catalyses the reaction cytidine + ATP = CMP + ADP + H(+). Its pathway is pyrimidine metabolism; CTP biosynthesis via salvage pathway; CTP from cytidine: step 1/3. The protein operates within pyrimidine metabolism; UMP biosynthesis via salvage pathway; UMP from uridine: step 1/1. The polypeptide is Uridine kinase (Anoxybacillus flavithermus (strain DSM 21510 / WK1)).